Reading from the N-terminus, the 136-residue chain is Large ribosomal subunit protein uL16 (136 aa).

It belongs to the universal ribosomal protein uL16 family. As to quaternary structure, part of the 50S ribosomal subunit.

Its function is as follows. Binds 23S rRNA and is also seen to make contacts with the A and possibly P site tRNAs. This chain is Large ribosomal subunit protein uL16, found in Edwardsiella ictaluri (strain 93-146).